The following is a 562-amino-acid chain: Bacillolysin (562 aa).

Residues 1–24 form the signal peptide; the sequence is MKKKKQALKVLLSVGILSSSFAFA. The propeptide at 25-245 is activation peptide; sequence HTSSAAPNNV…KQAAKPAAKP (221 aa). Residues Asp303, Asp305, and Asp384 each coordinate Ca(2+). Residue His388 coordinates Zn(2+). Glu389 is a catalytic residue. Zn(2+) contacts are provided by His392 and Glu412. The Ca(2+) site is built by Glu423, Asn429, Asp431, Glu433, Glu436, Tyr439, Thr440, and Asp446. The active-site Proton donor is the His477.

It belongs to the peptidase M4 family. Requires Ca(2+) as cofactor. It depends on Zn(2+) as a cofactor.

The protein localises to the secreted. It catalyses the reaction Similar, but not identical, to that of thermolysin.. Its function is as follows. Extracellular zinc metalloprotease. This is Bacillolysin from Priestia megaterium (strain ATCC 14581 / DSM 32 / CCUG 1817 / JCM 2506 / NBRC 15308 / NCIMB 9376 / NCTC 10342 / NRRL B-14308 / VKM B-512 / Ford 19) (Bacillus megaterium).